The sequence spans 73 residues: Maltose-binding periplasmic protein (73 aa).

Positions 1 to 30 (MMTKTNLKMGARTLALSVLATLVLSASALA) are cleaved as a signal peptide.

Belongs to the bacterial solute-binding protein 1 family.

It is found in the periplasm. Its function is as follows. Involved in the high-affinity maltose membrane transport system. Initial receptor for the active transport of and chemotaxis toward maltooligosaccharides. The protein is Maltose-binding periplasmic protein (malE) of Photorhabdus luminescens (Xenorhabdus luminescens).